A 428-amino-acid polypeptide reads, in one-letter code: MKIKFVDLFAGIGGIRIGFERAAKRFELETECVLSSEIDKKACETYALNFKEEPQGDIHEITSFPEFDFLLAGFPCQPFSYAGKQQGFGDTRGTLFFEVERVLRDNRPKAFLLENVRGLVTHDKGRTLKTIISKLEELGYGVSYLLLNSSTFGVPQNRVRIYILGILGSKPKLTLTSNVGAADSHKYKNEQISLFDESYATVKDILEDSPSEKYRCSDEFIGQLSKVVGNNFELLHGYRLIDYRGGNSIHSWELGIKGDCTKEEIEFLNQLIANRRKKIYGTHQDGKALTLEQIRTFYNHDQLEVIIKSLLQKGYLREEENKFNPVCGNMSFEVFKFLDPDSISITLTSSDAHKLGVVQNNVPRRITPRECARLQGFPDDFILHSNDNFAYKQLGNSVTVKVVEKVIEDLFQNNVNELFGQMKLANVV.

Residues 3 to 417 enclose the SAM-dependent MTase C5-type domain; the sequence is IKFVDLFAGI…EDLFQNNVNE (415 aa). Residue Cys-76 is part of the active site.

Belongs to the class I-like SAM-binding methyltransferase superfamily. C5-methyltransferase family. In terms of assembly, monomer.

It carries out the reaction a 2'-deoxycytidine in DNA + S-adenosyl-L-methionine = a 5-methyl-2'-deoxycytidine in DNA + S-adenosyl-L-homocysteine + H(+). Functionally, a methylase, recognizes the double-stranded sequence 5'-GGYRCC-3', methylates C-4 on both strands, and protects the DNA from cleavage by the BanI endonuclease. The sequence is that of Type II methyltransferase M.BanI (banIM) from Aneurinibacillus aneurinilyticus (Bacillus aneurinolyticus).